Here is a 417-residue protein sequence, read N- to C-terminus: Peptidyl-Asp metalloendopeptidase (417 aa).

The first 23 residues, 1–23 (MKSKSMCTTVGLIAMCLAGSAAA), serve as a signal peptide directing secretion. Histidine 331 provides a ligand contact to Zn(2+). Glutamate 332 is an active-site residue. The Zn(2+) site is built by histidine 335 and histidine 341.

The protein belongs to the peptidase M72 family. It depends on Zn(2+) as a cofactor.

The enzyme catalyses Cleavage of Xaa-|-Asp, Xaa-|-Glu and Xaa-|-cysteic acid bonds.. In terms of biological role, metalloprotease, specifically cleaves on the N-terminal side of aspartyl, glutamyl and cysteic acid residues. The chain is Peptidyl-Asp metalloendopeptidase from Xanthomonas campestris pv. campestris (strain ATCC 33913 / DSM 3586 / NCPPB 528 / LMG 568 / P 25).